A 104-amino-acid polypeptide reads, in one-letter code: Large ribosomal subunit protein uL24 (104 aa).

This sequence belongs to the universal ribosomal protein uL24 family. In terms of assembly, part of the 50S ribosomal subunit.

In terms of biological role, one of two assembly initiator proteins, it binds directly to the 5'-end of the 23S rRNA, where it nucleates assembly of the 50S subunit. One of the proteins that surrounds the polypeptide exit tunnel on the outside of the subunit. This Shewanella sp. (strain W3-18-1) protein is Large ribosomal subunit protein uL24.